Consider the following 244-residue polypeptide: tRNA (guanine-N(1)-)-methyltransferase (244 aa).

S-adenosyl-L-methionine is bound by residues G113 and 133–138 (IGDYVL).

It belongs to the RNA methyltransferase TrmD family. As to quaternary structure, homodimer.

The protein resides in the cytoplasm. The catalysed reaction is guanosine(37) in tRNA + S-adenosyl-L-methionine = N(1)-methylguanosine(37) in tRNA + S-adenosyl-L-homocysteine + H(+). Specifically methylates guanosine-37 in various tRNAs. This chain is tRNA (guanine-N(1)-)-methyltransferase, found in Bacillus cereus (strain B4264).